The chain runs to 83 residues: Cytochrome b559 subunit alpha (83 aa).

A helical transmembrane segment spans residues 21–35; it reads VIHSITIPSLFIAGW. A heme-binding site is contributed by histidine 23.

It belongs to the PsbE/PsbF family. Heterodimer of an alpha subunit and a beta subunit. PSII is composed of 1 copy each of membrane proteins PsbA, PsbB, PsbC, PsbD, PsbE, PsbF, PsbH, PsbI, PsbJ, PsbK, PsbL, PsbM, PsbT, PsbX, PsbY, PsbZ, Psb30/Ycf12, at least 3 peripheral proteins of the oxygen-evolving complex and a large number of cofactors. It forms dimeric complexes. It depends on heme b as a cofactor.

It is found in the plastid. It localises to the chloroplast thylakoid membrane. In terms of biological role, this b-type cytochrome is tightly associated with the reaction center of photosystem II (PSII). PSII is a light-driven water:plastoquinone oxidoreductase that uses light energy to abstract electrons from H(2)O, generating O(2) and a proton gradient subsequently used for ATP formation. It consists of a core antenna complex that captures photons, and an electron transfer chain that converts photonic excitation into a charge separation. This is Cytochrome b559 subunit alpha from Liriodendron tulipifera (Tuliptree).